We begin with the raw amino-acid sequence, 885 residues long: MTQDGYMQQEEEEWEREGLLDPAWEKQQRKTFTAWCNSHLRKAGTQIDNIEEDFRNGLKLMLLLEVISGETLGKPDRGKMRFHKIANVNKALDFIESKGVKLVSIGAEEIVDGNSKMTLGLIWTIILRFAIQDISVEEMTAKEGLLLWCQRKTAPYKNVNVQNFHLSWKDGLAFCALIHRHRPDLIDYGKLRKDNPMDNFNLAFDVAEKHLNIPRMLDAEDVVYTAKPDERAIMTYVSWYYHAFHGAQQAETAANRICKVLKVNQDNERLMEEYERLASDLLEWIRRTTPWLENRTTDNTLPGTQKKLEEFRSYRRQHKPPRVEQKANLETNFNTLQTKLRLSKRPAYMPSEGKMVSDITGAWKGLESAEKGFEEWLLSEMMRLERLDHLAQKFKHKADIHEEWTQGKEEMLVSHDFRQCKLNEIKALKKKHEAFESDLAAHQDRVEQIAAIAQELNALGYHDIASINARCQRICDQWDRLGTLTTRRRQALDEAEQILEKVDLFHLEFAKRAAPFNNWLDETREDLVDMFIVHSIEEIQQLIDAHESFKNTLGEADKEYKTIVGLAQEVQPMATQYQIPGGLENPYTTLTPEVITTKWRDVKQLVPQRDHTLQTELIRQQCNENLRRQFAEKANVVGPWIERQMDAVTAIGMGMQGTLEDQLQRLHEYDQAVVQYRPHVDDLEKIHQEVQEAMIFENRYTQYTMETLRVGWEQLLTSIHRNINEVENQILTRDSKGITQEQLNEFRTSFNHFDKKRTGRLAPEEFKSCLVSLGYNIRNDDRPEFRRILAIVDPNKTGYVHFDAFLDFMTREYTDTDTAEQMIDSFRILAGDKPYITADELRRELPPDQAEYCIRRMTPYNGQCAVPGALDYRSFSTALYGESDL.

The actin-binding stretch occupies residues 1 to 242 (MTQDGYMQQE…IMTYVSWYYH (242 aa)). Calponin-homology (CH) domains are found at residues 26–130 (KQQR…LRFA) and 139–245 (MTAK…HAFH). Spectrin repeat units follow at residues 270–377 (LMEE…EEWL), 389–494 (HLAQ…ALDE), 508–614 (EFAK…HTLQ), and 626–727 (LRRQ…NEVE). EF-hand domains follow at residues 741–776 (EQLN…LGYN) and 780–815 (DDRP…EYTD). Positions 754, 758, 760, 765, 793, 795, 797, and 799 each coordinate Ca(2+).

It belongs to the alpha-actinin family. Homodimer; antiparallel.

F-actin cross-linking protein which is thought to anchor actin to a variety of intracellular structures. This is a bundling protein. The polypeptide is Alpha-actinin (Dermatophagoides farinae (American house dust mite)).